The chain runs to 883 residues: EEF1AKMT4-ECE2 readthrough transcript protein (883 aa).

A methyltransferase-like region region spans residues M1–E160. Residues M1–E178 are Cytoplasmic-facing. S-adenosyl-L-methionine-binding residues include W26 and Y30. Y39 carries the phosphotyrosine modification. S-adenosyl-L-methionine contacts are provided by residues W41, G66, D88–Y89, D113–V114, and K130. Residues L179–L199 traverse the membrane as a helical segment. Topologically, residues G200 to W883 are lumenal. Positions T211–W883 constitute a Peptidase M13 domain. Disulfide bonds link C212–C217, C235–C868, C243–C828, C299–C548, and C757–C880. 7 N-linked (GlcNAc...) asparagine glycosylation sites follow: N279, N283, N324, N384, N429, N496, and N652. A Zn(2+)-binding site is contributed by H720. The active site involves E721. A Zn(2+)-binding site is contributed by H724. N745 and N753 each carry an N-linked (GlcNAc...) asparagine glycan. E780 contributes to the Zn(2+) binding site. The active-site Proton donor is the D784.

In the N-terminal section; belongs to the methyltransferase superfamily. This sequence in the C-terminal section; belongs to the peptidase M13 family. Zn(2+) is required as a cofactor.

It is found in the golgi apparatus membrane. It localises to the cytoplasmic vesicle. The protein resides in the secretory vesicle membrane. It catalyses the reaction Hydrolysis of the 21-Trp-|-Val-22 bond in big endothelin to form endothelin 1.. With respect to regulation, inhibited by phosphoramidon. Its function is as follows. Converts big endothelin-1 to endothelin-1. May also have methyltransferase activity. May play a role in amyloid-beta processing. This is EEF1AKMT4-ECE2 readthrough transcript protein from Homo sapiens (Human).